Consider the following 226-residue polypeptide: CASP-like protein 2BC1 (226 aa).

Over 1 to 37 (MRKHIDIVFSRLSGPILNPPPDNNVIPKTDRKLRITE) the chain is Cytoplasmic. A helical transmembrane segment spans residues 38–58 (VILRFAVVIFALVSAIMVGTA). At 59 to 78 (SGTRDLGGGIRIHAHFTLLK) the chain is on the extracellular side. Residues 79 to 99 (TLPFLVIVDGILAVYSLLQGL) form a helical membrane-spanning segment. Residues 100 to 114 (RCFLSLYMRHILLNK) lie on the Cytoplasmic side of the membrane. Residues 115 to 135 (ALAWTIFCCDQALAYVIFAAA) form a helical membrane-spanning segment. Topologically, residues 136–170 (ASTAETAYISEQGLDELQWIKVCMFFRAYCFKSGA) are extracellular. A helical transmembrane segment spans residues 171–191 (GMINAFLAALCMVFVSGMSVF). Residues 192–226 (HLFRLYGEKRAYGHIAEQVVISEEAAERRNSLNGI) lie on the Cytoplasmic side of the membrane.

The protein belongs to the Casparian strip membrane proteins (CASP) family. Homodimer and heterodimers.

The protein resides in the cell membrane. In Picea sitchensis (Sitka spruce), this protein is CASP-like protein 2BC1.